Here is a 299-residue protein sequence, read N- to C-terminus: 4-hydroxybenzoate octaprenyltransferase (299 aa).

7 helical membrane passes run Ile31 to Leu51, Trp54 to Ile74, Val105 to Leu125, Gln148 to Ala168, Ile177 to Met197, Phe241 to Gln261, and Phe277 to Ile297.

It belongs to the UbiA prenyltransferase family. Mg(2+) serves as cofactor.

It localises to the cell inner membrane. It carries out the reaction all-trans-octaprenyl diphosphate + 4-hydroxybenzoate = 4-hydroxy-3-(all-trans-octaprenyl)benzoate + diphosphate. The protein operates within cofactor biosynthesis; ubiquinone biosynthesis. In terms of biological role, catalyzes the prenylation of para-hydroxybenzoate (PHB) with an all-trans polyprenyl group. Mediates the second step in the final reaction sequence of ubiquinone-8 (UQ-8) biosynthesis, which is the condensation of the polyisoprenoid side chain with PHB, generating the first membrane-bound Q intermediate 3-octaprenyl-4-hydroxybenzoate. This Saccharophagus degradans (strain 2-40 / ATCC 43961 / DSM 17024) protein is 4-hydroxybenzoate octaprenyltransferase.